The primary structure comprises 213 residues: FMN-dependent NADH:quinone oxidoreductase 1 (213 aa).

18 to 20 (SVS) contacts FMN.

This sequence belongs to the azoreductase type 1 family. Homodimer. FMN is required as a cofactor.

The catalysed reaction is 2 a quinone + NADH + H(+) = 2 a 1,4-benzosemiquinone + NAD(+). The enzyme catalyses N,N-dimethyl-1,4-phenylenediamine + anthranilate + 2 NAD(+) = 2-(4-dimethylaminophenyl)diazenylbenzoate + 2 NADH + 2 H(+). Its function is as follows. Quinone reductase that provides resistance to thiol-specific stress caused by electrophilic quinones. In terms of biological role, also exhibits azoreductase activity. Catalyzes the reductive cleavage of the azo bond in aromatic azo compounds to the corresponding amines. This is FMN-dependent NADH:quinone oxidoreductase 1 from Bacillus cereus (strain ZK / E33L).